We begin with the raw amino-acid sequence, 315 residues long: WD repeat domain-containing protein 83 (315 aa).

7 WD repeats span residues 23 to 62 (CGQG…LLRT), 65 to 104 (GHGY…VVRK), 107 to 146 (GHAG…PEPV), 151 to 188 (EARD…LFSD), 190 to 228 (VGSP…LLGE), 231 to 272 (GHKN…LALA), and 275 to 313 (VGSG…AEDG).

This sequence belongs to the WD repeat MORG1 family. Interacts with EGLN3/PHD3. Interacts with ERK signaling proteins MAP2K1/MEK1, MAP2K2/MEK2, LAMTOR3, ARAF/Raf-1, MAPK1/ERK2 and MAPK3/ERK1. Identified in the spliceosome C complex. Interacts with PARD6B and CRB3. Interacts strongly with GTP-bound RRAGA but not with inactive GDP-bound. Interacts with p62/SQSTM1.

Its subcellular location is the cytoplasm. It is found in the lysosome. The protein localises to the nucleus. Functionally, molecular scaffold protein for various multimeric protein complexes. Acts as a module in the assembly of a multicomponent scaffold for the ERK pathway, linking ERK responses to specific agonists. At low concentrations it enhances ERK activation, whereas high concentrations lead to the inhibition of ERK activation. Also involved in response to hypoxia by acting as a negative regulator of HIF1A/HIF-1-alpha via its interaction with EGLN3/PHD3. May promote degradation of HIF1A. May act by recruiting signaling complexes to a specific upstream activator. May also be involved in pre-mRNA splicing. Participates in tight junction development by regulating apico-basal polarity, a key step in tissue development and organization. Mechanistically, regulates the translocation of PAR6-aPKC from the cytoplasm to the apical surface by acting as an adapter between PARD6B AND CRB3. Also acts as a negative regulator of mTORC1 under nutrient-rich conditions by binding to the active Rag GTPases to inhibit mTORC1 localization to the lysosome and phosphorylation of downstream targets. This facilitates constitutive basal autophagy during nutrient availability. This is WD repeat domain-containing protein 83 (WDR83) from Homo sapiens (Human).